The primary structure comprises 437 residues: uncharacterized protein (437 aa).

Basic residues-rich tracts occupy residues M1–N29, L81–V91, and R101–R118. 2 disordered regions span residues M1–H31 and E77–R437. Over residues H119 to L132 the composition is skewed to basic and acidic residues. Over residues R133–R142 the composition is skewed to basic residues. Residues H143–R164 show a composition bias toward basic and acidic residues. Basic residues predominate over residues H165–Q190. Basic and acidic residues-rich tracts occupy residues G198–G209 and H217–R253. 2 stretches are compositionally biased toward basic residues: residues T284–G293 and P324–H348. Residues D371 to A382 are compositionally biased toward low complexity.

This is an uncharacterized protein from Haloferax lucentense (strain DSM 14919 / JCM 9276 / NCIMB 13854 / Aa 2.2) (Haloferax alicantei).